The sequence spans 283 residues: MTVQTSKNPQVDIAEDNAFFPSEYSLSQYTSPVSDLDGVDYPKPYRGKHKILVIAADERYLPTDNGKLFSTGNHPIETLLPLYHLHAAGFEFEVATISGLMTKFEYWAMPHKDEKVMPFFEQHKSLFRNPKKLADVVASLNADSEYAAIFVPGGHGALIGLPESQDVAAALQWAIKNDRFVISLCHGPAAFLALRHGDNPLNGYSICAFPDAADKQTPEIGYMPGHLTWYFGEELKKMGMNIINDDITGRVHKDRKVLTGDSPFAANALGKLAAQEMLAAYAD.

Zn(2+)-binding residues include His-86, Glu-91, and His-123. Residue Cys-185 is the Nucleophile of the active site.

The protein belongs to the peptidase C56 family. HchA subfamily. As to quaternary structure, homodimer.

It is found in the cytoplasm. The catalysed reaction is N(omega)-(1-hydroxy-2-oxopropyl)-L-arginyl-[protein] + H2O = lactate + L-arginyl-[protein] + H(+). It carries out the reaction N(6)-(1-hydroxy-2-oxopropyl)-L-lysyl-[protein] + H2O = lactate + L-lysyl-[protein] + H(+). The enzyme catalyses S-(1-hydroxy-2-oxopropyl)-L-cysteinyl-[protein] + H2O = lactate + L-cysteinyl-[protein] + H(+). It catalyses the reaction N(omega)-(1-hydroxy-2-oxoethyl)-L-arginyl-[protein] + H2O = L-arginyl-[protein] + glycolate + H(+). The catalysed reaction is N(6)-(1-hydroxy-2-oxoethyl)-L-lysyl-[protein] + H2O = glycolate + L-lysyl-[protein] + H(+). It carries out the reaction S-(1-hydroxy-2-oxoethyl)-L-cysteinyl-[protein] + H2O = glycolate + L-cysteinyl-[protein] + H(+). The enzyme catalyses N(2)-(1-hydroxy-2-oxopropyl)-dGTP + H2O = lactate + dGTP + H(+). It catalyses the reaction N(2)-(1-hydroxy-2-oxopropyl)-GTP + H2O = lactate + GTP + H(+). The catalysed reaction is N(2)-(1-hydroxy-2-oxopropyl)-GDP + H2O = lactate + GDP + H(+). It carries out the reaction N(2)-(1-hydroxy-2-oxopropyl)-GMP + H2O = lactate + GMP + H(+). The enzyme catalyses N(2)-(1-hydroxy-2-oxoethyl)-dGTP + H2O = dGTP + glycolate + H(+). It catalyses the reaction N(2)-(1-hydroxy-2-oxoethyl)-GTP + H2O = glycolate + GTP + H(+). The catalysed reaction is N(2)-(1-hydroxy-2-oxoethyl)-GDP + H2O = glycolate + GDP + H(+). It carries out the reaction N(2)-(1-hydroxy-2-oxoethyl)-GMP + H2O = glycolate + GMP + H(+). The enzyme catalyses an N(2)-(1-hydroxy-2-oxopropyl)-guanosine in RNA + H2O = a guanosine in RNA + lactate + H(+). It catalyses the reaction an N(2)-(1-hydroxy-2-oxopropyl)-2'-deoxyguanosine in DNA + H2O = a 2'-deoxyguanosine in DNA + lactate + H(+). The catalysed reaction is an N(2)-(1-hydroxy-2-oxoethyl)-guanosine in RNA + H2O = a guanosine in RNA + glycolate + H(+). It carries out the reaction an N(2)-(1-hydroxy-2-oxoethyl)-2'-deoxyguanosine in DNA + H2O = a 2'-deoxyguanosine in DNA + glycolate + H(+). Protein and nucleotide deglycase that catalyzes the deglycation of the Maillard adducts formed between amino groups of proteins or nucleotides and reactive carbonyl groups of glyoxals. Thus, functions as a protein deglycase that repairs methylglyoxal- and glyoxal-glycated proteins, and releases repaired proteins and lactate or glycolate, respectively. Deglycates cysteine, arginine and lysine residues in proteins, and thus reactivates these proteins by reversing glycation by glyoxals. Acts on early glycation intermediates (hemithioacetals and aminocarbinols), preventing the formation of Schiff bases and advanced glycation endproducts (AGE). Also functions as a nucleotide deglycase able to repair glycated guanine in the free nucleotide pool (GTP, GDP, GMP, dGTP) and in DNA and RNA. Is thus involved in a major nucleotide repair system named guanine glycation repair (GG repair), dedicated to reversing methylglyoxal and glyoxal damage via nucleotide sanitization and direct nucleic acid repair. Plays an important role in protecting cells from carbonyl stress. The protein is Protein/nucleic acid deglycase HchA of Shigella sonnei (strain Ss046).